The primary structure comprises 336 residues: MKERIVNLETLDFETSQEVSLRPDLWENYIGQEKIKNNLQISICAAKKRQESLDHMLFFGPPGLGKTSISHIIAKEMETNIKITAAPMIEKSGDLAAILTNLQAKDILFIDEIHRLSPAIEEVLYPAMEDFRLDIIIGSGPAAQTIKIDLPPFTLIGATTRVGMLSNPLRDRFGMSFRMQFYSPSELALIIKKAATKLNQDIKEESADEIAKRSRGTPRIALRLLKRVRDFALVKNSSLMDLNITLHALNELGVNELGFDEADLAYLSLLANAQGKPVGLNTIAASMREDESTIEDVIEPFLLANGYLERTAKGRIATPKTHALLKIPTLKSQSLF.

The tract at residues 1–182 (MKERIVNLET…FGMSFRMQFY (182 aa)) is large ATPase domain (RuvB-L). Residues Leu-21, Arg-22, Gly-63, Lys-66, Thr-67, Ser-68, 129–131 (EDF), Arg-172, Tyr-182, and Arg-219 each bind ATP. A Mg(2+)-binding site is contributed by Thr-67. The interval 183–253 (SPSELALIIK…ITLHALNELG (71 aa)) is small ATPAse domain (RuvB-S). The interval 256–336 (ELGFDEADLA…IPTLKSQSLF (81 aa)) is head domain (RuvB-H). DNA is bound by residues Arg-310 and Arg-315.

The protein belongs to the RuvB family. As to quaternary structure, homohexamer. Forms an RuvA(8)-RuvB(12)-Holliday junction (HJ) complex. HJ DNA is sandwiched between 2 RuvA tetramers; dsDNA enters through RuvA and exits via RuvB. An RuvB hexamer assembles on each DNA strand where it exits the tetramer. Each RuvB hexamer is contacted by two RuvA subunits (via domain III) on 2 adjacent RuvB subunits; this complex drives branch migration. In the full resolvosome a probable DNA-RuvA(4)-RuvB(12)-RuvC(2) complex forms which resolves the HJ.

It is found in the cytoplasm. It carries out the reaction ATP + H2O = ADP + phosphate + H(+). In terms of biological role, the RuvA-RuvB-RuvC complex processes Holliday junction (HJ) DNA during genetic recombination and DNA repair, while the RuvA-RuvB complex plays an important role in the rescue of blocked DNA replication forks via replication fork reversal (RFR). RuvA specifically binds to HJ cruciform DNA, conferring on it an open structure. The RuvB hexamer acts as an ATP-dependent pump, pulling dsDNA into and through the RuvAB complex. RuvB forms 2 homohexamers on either side of HJ DNA bound by 1 or 2 RuvA tetramers; 4 subunits per hexamer contact DNA at a time. Coordinated motions by a converter formed by DNA-disengaged RuvB subunits stimulates ATP hydrolysis and nucleotide exchange. Immobilization of the converter enables RuvB to convert the ATP-contained energy into a lever motion, pulling 2 nucleotides of DNA out of the RuvA tetramer per ATP hydrolyzed, thus driving DNA branch migration. The RuvB motors rotate together with the DNA substrate, which together with the progressing nucleotide cycle form the mechanistic basis for DNA recombination by continuous HJ branch migration. Branch migration allows RuvC to scan DNA until it finds its consensus sequence, where it cleaves and resolves cruciform DNA. The polypeptide is Holliday junction branch migration complex subunit RuvB (Helicobacter acinonychis (strain Sheeba)).